The following is a 255-amino-acid chain: ATP synthase subunit a (255 aa).

Positions 1 to 6 are cleaved as a propeptide — removed in mature form; the sequence is MNFIIN. Helical transmembrane passes span 32-52, 91-111, 121-141, 159-200, and 219-251; these read LTSF…FSIL, LFPF…VSLV, LIWT…TGLA, PLVP…LAGL, and LSIL…IKDA.

As to quaternary structure, F-type ATP synthases have 2 components, the catalytic core F(1) and the membrane-embedded component F(0), linked together by a central stalk and a peripheral stalk. The central stalk, also called rotor shaft, is often seen as part of F(1). The peripheral stalk is seen as part of F(0). F(0) contains the membrane channel next to the rotor. F-type ATP synthases form dimers but each monomer functions independently in ATP generation. The dimer consists of 17 different polypeptides: ATP1 (subunit alpha, 3 molecules per monomer, part of F(1)), ATP2 (subunit beta, 3 copies per monomer, part of F(1)), ATP3 (subunit gamma, part of the central stalk), ATP4 (subunit b, part of the peripheral stalk), ATP5/OSCP (subunit 5/OSCP, part of the peripheral stalk), ATP6 (subunit a, part of the peripheral stalk), ATP7 (subunit d, part of the peripheral stalk), ATP8 (subunit 8, part of the peripheral stalk), OLI1 (subunit c, part of the rotor, 10 molecules per monomer), ATP14 (subunit h, part of the peripheral stalk), ATP15 (subunit epsilon, part of the central stalk), ATP16 (subunit delta, part of the central stalk), ATP17 (subunit f, part of the peripheral stalk), ATP18 (subunit i/j, part of the peripheral stalk), ATP19 (subunit k, dimer-specific, at interface between monomers), ATP20 (subunit g, at interface between monomers), TIM11 (subunit e, at interface between monomers).

It localises to the mitochondrion inner membrane. Its function is as follows. Mitochondrial membrane ATP synthase (F(1)F(0) ATP synthase or Complex V) produces ATP from ADP in the presence of a proton gradient across the membrane which is generated by electron transport complexes of the respiratory chain. F-type ATP synthases consist of two structural domains, F(1) - containing the extramembraneous catalytic core, and F(0) - containing the membrane proton channel, linked together by a central stalk and a peripheral stalk. During catalysis, ATP synthesis in the catalytic domain of F(1) is coupled via a rotary mechanism of the central stalk subunits to proton translocation. Key component of the proton channel; it may play a direct role in the translocation of protons across the membrane. This Yarrowia lipolytica (strain CLIB 122 / E 150) (Yeast) protein is ATP synthase subunit a.